A 152-amino-acid polypeptide reads, in one-letter code: Ribosome maturation factor RimP (152 aa).

It belongs to the RimP family.

The protein localises to the cytoplasm. Its function is as follows. Required for maturation of 30S ribosomal subunits. The sequence is that of Ribosome maturation factor RimP from Salmonella arizonae (strain ATCC BAA-731 / CDC346-86 / RSK2980).